A 309-amino-acid chain; its full sequence is Ribosomal RNA large subunit methyltransferase F (309 aa).

It belongs to the methyltransferase superfamily. METTL16/RlmF family.

It is found in the cytoplasm. The enzyme catalyses adenosine(1618) in 23S rRNA + S-adenosyl-L-methionine = N(6)-methyladenosine(1618) in 23S rRNA + S-adenosyl-L-homocysteine + H(+). Functionally, specifically methylates the adenine in position 1618 of 23S rRNA. This is Ribosomal RNA large subunit methyltransferase F from Cronobacter sakazakii (strain ATCC BAA-894) (Enterobacter sakazakii).